Reading from the N-terminus, the 801-residue chain is Phenylalanine--tRNA ligase beta subunit (801 aa).

The 115-residue stretch at 39 to 153 (AEGLSKLVVG…EGAIPGDSIF (115 aa)) folds into the tRNA-binding domain. The B5 domain maps to 406–481 (TEPVEVSTTL…RIYGYEKLPT (76 aa)). Mg(2+)-binding residues include D459, D465, E468, and E469. One can recognise an FDX-ACB domain in the interval 708-801 (TKYPSVSRDI…LVEKVNAEIR (94 aa)).

It belongs to the phenylalanyl-tRNA synthetase beta subunit family. Type 1 subfamily. Tetramer of two alpha and two beta subunits. Mg(2+) serves as cofactor.

It localises to the cytoplasm. It carries out the reaction tRNA(Phe) + L-phenylalanine + ATP = L-phenylalanyl-tRNA(Phe) + AMP + diphosphate + H(+). This is Phenylalanine--tRNA ligase beta subunit from Streptococcus agalactiae serotype V (strain ATCC BAA-611 / 2603 V/R).